Reading from the N-terminus, the 32-residue chain is MEALVYVFLLIGTLMIIFFAIFFREPPRIAKK.

A helical transmembrane segment spans residues 3 to 23; the sequence is ALVYVFLLIGTLMIIFFAIFF.

This sequence belongs to the PsbT family. In terms of assembly, PSII is composed of 1 copy each of membrane proteins PsbA, PsbB, PsbC, PsbD, PsbE, PsbF, PsbH, PsbI, PsbJ, PsbK, PsbL, PsbM, PsbT, PsbY, PsbZ, Psb30/Ycf12, at least 3 peripheral proteins of the oxygen-evolving complex and a large number of cofactors. It forms dimeric complexes.

It is found in the plastid. The protein resides in the chloroplast thylakoid membrane. In terms of biological role, found at the monomer-monomer interface of the photosystem II (PS II) dimer, plays a role in assembly and dimerization of PSII. PSII is a light-driven water plastoquinone oxidoreductase, using light energy to abstract electrons from H(2)O, generating a proton gradient subsequently used for ATP formation. This Cyanidioschyzon merolae (strain NIES-3377 / 10D) (Unicellular red alga) protein is Photosystem II reaction center protein T.